The primary structure comprises 318 residues: tRNA(Ile)-lysidine synthase (318 aa).

26-31 (SGGADS) lines the ATP pocket.

Belongs to the tRNA(Ile)-lysidine synthase family.

The protein resides in the cytoplasm. It carries out the reaction cytidine(34) in tRNA(Ile2) + L-lysine + ATP = lysidine(34) in tRNA(Ile2) + AMP + diphosphate + H(+). Ligates lysine onto the cytidine present at position 34 of the AUA codon-specific tRNA(Ile) that contains the anticodon CAU, in an ATP-dependent manner. Cytidine is converted to lysidine, thus changing the amino acid specificity of the tRNA from methionine to isoleucine. The polypeptide is tRNA(Ile)-lysidine synthase (Nocardia farcinica (strain IFM 10152)).